The sequence spans 280 residues: MSEKFDCHYCRDPLQGKKYVQKDGRHCCLKCFDKFCANTCVDCRKPISADAKEVHYKNRYWHDNCFRCAKCLHPLASETFVSKDGKILCNKCATREDSPRCKGCFKAIVAGDQNVEYKGTVWHKDCFTCSNCKQVIGTGSFFPKGEDFYCVTCHETKFAKHCVKCNKAITSGGITYQDQPWHAECFVCVTCSKKLAGQRFTAVEDQYYCVDCYKNFVAKKCAGCKNPITGFGKGSSVVAYEGQSWHDYCFHCKKCSVNLANKRFVFHNEQVYCPDCAKKL.

An N-acetylserine modification is found at Ser2. Lys4 bears the N6-acetyllysine mark. The C4-type zinc-finger motif lies at 7 to 31; that stretch reads CHYCRDPLQGKKYVQKDGRHCCLKC. LIM zinc-binding domains are found at residues 40–92, 101–153, 162–212, and 221–276; these read CVDC…CNKC, CKGC…CVTC, CVKC…CVDC, and CAGC…CPDC. Lys86 is covalently cross-linked (Glycyl lysine isopeptide (Lys-Gly) (interchain with G-Cter in SUMO2)).

As to expression, isoform 1 seems to be most abundant in each tissue and isoform 2 much less abundant. Isoform 1 is highly expressed in skeletal muscle and lung, and to a lesser extent in heart, brain and kidney. Isoform 2 was found in brain, lung kidney and genital organs.

Its subcellular location is the cytoplasm. The protein resides in the nucleus. May have an involvement in muscle development or hypertrophy. Isoform 2 binds to RBP-J and plays a negative regulatory role in the RBP-J-mediated transcription in mammalian systems. The sequence is that of Four and a half LIM domains protein 1 (Fhl1) from Mus musculus (Mouse).